We begin with the raw amino-acid sequence, 170 residues long: Large ribosomal subunit protein uL16 (170 aa).

It belongs to the universal ribosomal protein uL16 family.

The protein is Large ribosomal subunit protein uL16 of Methanoculleus marisnigri (strain ATCC 35101 / DSM 1498 / JR1).